Here is a 109-residue protein sequence, read N- to C-terminus: Large ribosomal subunit protein uL24 (109 aa).

This sequence belongs to the universal ribosomal protein uL24 family. In terms of assembly, part of the 50S ribosomal subunit.

One of two assembly initiator proteins, it binds directly to the 5'-end of the 23S rRNA, where it nucleates assembly of the 50S subunit. In terms of biological role, one of the proteins that surrounds the polypeptide exit tunnel on the outside of the subunit. The polypeptide is Large ribosomal subunit protein uL24 (Desulforapulum autotrophicum (strain ATCC 43914 / DSM 3382 / VKM B-1955 / HRM2) (Desulfobacterium autotrophicum)).